A 355-amino-acid chain; its full sequence is Probable poly-beta-1,6-N-acetyl-D-glucosamine export protein (355 aa).

A run of 10 helical transmembrane segments spans residues 13 to 30 (AFIC…QITL), 45 to 67 (YIRN…LTTL), 74 to 96 (INYL…LFYS), 116 to 138 (VLGQ…SYII), 145 to 167 (LFNS…HYFL), 187 to 204 (MILG…IGYN), 211 to 233 (FLEK…FIAV), 243 to 262 (SFTY…LLGV), 269 to 291 (MLLN…HPII), and 306 to 328 (TIVF…GMML).

This sequence belongs to the acyltransferase 3 family.

The protein localises to the cell membrane. Presumably involved in the export of the biofilm adhesin polysaccharide poly-beta-1,6-N-acetyl-D-glucosamine (PNAG, also referred to as PIA) across the cell membrane. This Staphylococcus epidermidis protein is Probable poly-beta-1,6-N-acetyl-D-glucosamine export protein (icaC).